We begin with the raw amino-acid sequence, 823 residues long: Putative E3 ubiquitin-protein ligase RF4 (823 aa).

3 disordered regions span residues 24-72, 224-291, and 432-464; these read TVSP…NGSV, SKLS…CSGS, and ESVT…SEEK. Residues 61–72 show a composition bias toward polar residues; that stretch reads KPQNHLSGNGSV. A compositionally biased stretch (low complexity) spans 224 to 240; the sequence is SKLSDSESLGAESNPPK. A compositionally biased stretch (polar residues) spans 267–282; the sequence is FPNTPNSKKTQSSGTT. Basic and acidic residues predominate over residues 453 to 464; the sequence is SEKKSGSESEEK. Residues 536 to 738 adopt a coiled-coil conformation; that stretch reads ELKALRKERE…ELKLKSDYSR (203 aa). The segment at 768 to 808 adopts an RING-type zinc-finger fold; the sequence is CVMCLSEEMSVIFLPCAHQVLCFKCNQLHEKEGMMDCPSCR.

Belongs to the RING-type zinc finger family.

The catalysed reaction is S-ubiquitinyl-[E2 ubiquitin-conjugating enzyme]-L-cysteine + [acceptor protein]-L-lysine = [E2 ubiquitin-conjugating enzyme]-L-cysteine + N(6)-ubiquitinyl-[acceptor protein]-L-lysine.. It functions in the pathway protein modification; protein ubiquitination. This chain is Putative E3 ubiquitin-protein ligase RF4 (RF4), found in Arabidopsis thaliana (Mouse-ear cress).